The chain runs to 361 residues: Chorismate synthase (361 aa).

Arg-48 and Arg-54 together coordinate NADP(+). FMN is bound by residues 125–127 (RSS), 238–239 (NA), Gly-278, 293–297 (KPTSS), and Arg-319.

This sequence belongs to the chorismate synthase family. Homotetramer. The cofactor is FMNH2.

It carries out the reaction 5-O-(1-carboxyvinyl)-3-phosphoshikimate = chorismate + phosphate. It functions in the pathway metabolic intermediate biosynthesis; chorismate biosynthesis; chorismate from D-erythrose 4-phosphate and phosphoenolpyruvate: step 7/7. Catalyzes the anti-1,4-elimination of the C-3 phosphate and the C-6 proR hydrogen from 5-enolpyruvylshikimate-3-phosphate (EPSP) to yield chorismate, which is the branch point compound that serves as the starting substrate for the three terminal pathways of aromatic amino acid biosynthesis. This reaction introduces a second double bond into the aromatic ring system. This Klebsiella pneumoniae (strain 342) protein is Chorismate synthase.